The sequence spans 180 residues: UPF0149 protein XOO1028 (180 aa).

Belongs to the UPF0149 family.

This is UPF0149 protein XOO1028 from Xanthomonas oryzae pv. oryzae (strain MAFF 311018).